Here is a 524-residue protein sequence, read N- to C-terminus: Alkaline phosphatase, tissue-nonspecific isozyme (524 aa).

Residues Met-1–Ser-17 form the signal peptide. Residue Asp-60 participates in Mg(2+) binding. Residues Asp-60 and Ser-110 each contribute to the Zn(2+) site. Residue Ser-110 is the Phosphoserine intermediate of the active site. Ser-110 bears the Phosphoserine mark. Cys-139 and Cys-201 are joined by a disulfide. Residue Asn-140 is glycosylated (N-linked (GlcNAc...) asparagine). Thr-173 contacts Mg(2+). Asn-230 carries an N-linked (GlcNAc...) asparagine glycan. Glu-235 contributes to the Ca(2+) binding site. Asn-271 is a glycosylation site (N-linked (GlcNAc...) asparagine). Residues Phe-290 and Glu-291 each coordinate Ca(2+). The N-linked (GlcNAc...) asparagine glycan is linked to Asn-302. Asp-306 provides a ligand contact to Ca(2+). Glu-332 contributes to the Mg(2+) binding site. Positions 337, 341, 378, and 379 each coordinate Zn(2+). N-linked (GlcNAc...) asparagine glycosylation occurs at Asn-430. Residue His-454 participates in Zn(2+) binding. A disulfide bridge links Cys-489 with Cys-497. Ser-499 carries GPI-anchor amidated serine lipidation. Residues Ala-500 to Phe-524 constitute a propeptide, removed in mature form.

It belongs to the alkaline phosphatase family. Homodimer. The cofactor is Mg(2+). It depends on Zn(2+) as a cofactor. Ca(2+) is required as a cofactor. N-glycosylated.

Its subcellular location is the cell membrane. The protein resides in the extracellular vesicle membrane. It localises to the mitochondrion membrane. It is found in the mitochondrion intermembrane space. It carries out the reaction a phosphate monoester + H2O = an alcohol + phosphate. The catalysed reaction is diphosphate + H2O = 2 phosphate + H(+). It catalyses the reaction pyridoxal 5'-phosphate + H2O = pyridoxal + phosphate. The enzyme catalyses phosphoethanolamine + H2O = ethanolamine + phosphate. It carries out the reaction N-phosphocreatine + H2O = creatine + phosphate. The catalysed reaction is ATP + H2O = ADP + phosphate + H(+). It catalyses the reaction ADP + H2O = AMP + phosphate + H(+). The enzyme catalyses AMP + H2O = adenosine + phosphate. With respect to regulation, phosphatase activity is specifically inhibited by 5-((5-chloro-2-methoxyphenyl)sulfonamido)nicotinamide (SBI-425). In terms of biological role, alkaline phosphatase that metabolizes various phosphate compounds and plays a key role in skeletal mineralization and adaptive thermogenesis. Has broad substrate specificity and can hydrolyze a considerable variety of compounds: however, only a few substrates, such as diphosphate (inorganic pyrophosphate; PPi), pyridoxal 5'-phosphate (PLP) and N-phosphocreatine are natural substrates. Plays an essential role in skeletal and dental mineralization via its ability to hydrolyze extracellular diphosphate, a potent mineralization inhibitor, to phosphate: it thereby promotes hydroxyapatite crystal formation and increases inorganic phosphate concentration. Acts in a non-redundant manner with PHOSPHO1 in skeletal mineralization: while PHOSPHO1 mediates the initiation of hydroxyapatite crystallization in the matrix vesicles (MVs), ALPL/TNAP catalyzes the spread of hydroxyapatite crystallization in the extracellular matrix. Also promotes dephosphorylation of osteopontin (SSP1), an inhibitor of hydroxyapatite crystallization in its phosphorylated state; it is however unclear whether ALPL/TNAP mediates SSP1 dephosphorylation via a direct or indirect manner. Catalyzes dephosphorylation of PLP to pyridoxal (PL), the transportable form of vitamin B6, in order to provide a sufficient amount of PLP in the brain, an essential cofactor for enzymes catalyzing the synthesis of diverse neurotransmitters. Additionally, also able to mediate ATP degradation in a stepwise manner to adenosine, thereby regulating the availability of ligands for purinergic receptors. Also capable of dephosphorylating microbial products, such as lipopolysaccharides (LPS) as well as other phosphorylated small-molecules, such as poly-inosine:cytosine (poly I:C). Acts as a key regulator of adaptive thermogenesis as part of the futile creatine cycle: localizes to the mitochondria of thermogenic fat cells and acts by mediating hydrolysis of N-phosphocreatine to initiate a futile cycle of creatine dephosphorylation and phosphorylation. During the futile creatine cycle, creatine and N-phosphocreatine are in a futile cycle, which dissipates the high energy charge of N-phosphocreatine as heat without performing any mechanical or chemical work. The polypeptide is Alkaline phosphatase, tissue-nonspecific isozyme (ALPL) (Felis catus (Cat)).